Consider the following 359-residue polypeptide: 3-dehydroquinate synthase (359 aa).

NAD(+) is bound by residues 71-76 (DGEQYK), 105-109 (GVIGD), 129-130 (TT), lysine 142, lysine 151, and 169-172 (CLST). Glutamate 184, histidine 247, and histidine 264 together coordinate Zn(2+).

It belongs to the sugar phosphate cyclases superfamily. Dehydroquinate synthase family. Requires Co(2+) as cofactor. The cofactor is Zn(2+). NAD(+) serves as cofactor.

The protein localises to the cytoplasm. It carries out the reaction 7-phospho-2-dehydro-3-deoxy-D-arabino-heptonate = 3-dehydroquinate + phosphate. It participates in metabolic intermediate biosynthesis; chorismate biosynthesis; chorismate from D-erythrose 4-phosphate and phosphoenolpyruvate: step 2/7. Catalyzes the conversion of 3-deoxy-D-arabino-heptulosonate 7-phosphate (DAHP) to dehydroquinate (DHQ). This chain is 3-dehydroquinate synthase, found in Shewanella pealeana (strain ATCC 700345 / ANG-SQ1).